Consider the following 432-residue polypeptide: Pentatricopeptide repeat-containing protein 2, mitochondrial (432 aa).

A mitochondrion-targeting transit peptide spans 1–33 (MQFIKRTFPRRAFVDLLLNRFCLREFATTYSVS). 4 PPR repeats span residues 108-142 (KTVA…QQKP), 143-179 (SDHT…VTAS), 360-394 (NLQV…GPFP), and 395-429 (TQQT…NVPV).

It localises to the mitochondrion. Functionally, mitochondrial RNA-binding protein that acts as a general translation factor. Plays a critical role in the synthesis of all mitochondrial DNA-encoded oxidative phosphorylation subunits, which are essential for mitochondrial respiration. Essential for the expression of iron-sulfur cluster (ISC) proteins as well as other heme proteins related to iron-sensing, and thus plays a key role in iron homeostasis. This Schizosaccharomyces pombe (strain 972 / ATCC 24843) (Fission yeast) protein is Pentatricopeptide repeat-containing protein 2, mitochondrial.